A 478-amino-acid polypeptide reads, in one-letter code: Protein nucleotidyltransferase YdiU (478 aa).

Residues G84, G86, R87, K107, D119, G120, R170, and R177 each coordinate ATP. The active-site Proton acceptor is D246. Residues N247 and D256 each coordinate Mg(2+). D256 contacts ATP.

The protein belongs to the SELO family. Mg(2+) serves as cofactor. It depends on Mn(2+) as a cofactor.

The enzyme catalyses L-seryl-[protein] + ATP = 3-O-(5'-adenylyl)-L-seryl-[protein] + diphosphate. The catalysed reaction is L-threonyl-[protein] + ATP = 3-O-(5'-adenylyl)-L-threonyl-[protein] + diphosphate. It catalyses the reaction L-tyrosyl-[protein] + ATP = O-(5'-adenylyl)-L-tyrosyl-[protein] + diphosphate. It carries out the reaction L-histidyl-[protein] + UTP = N(tele)-(5'-uridylyl)-L-histidyl-[protein] + diphosphate. The enzyme catalyses L-seryl-[protein] + UTP = O-(5'-uridylyl)-L-seryl-[protein] + diphosphate. The catalysed reaction is L-tyrosyl-[protein] + UTP = O-(5'-uridylyl)-L-tyrosyl-[protein] + diphosphate. Its function is as follows. Nucleotidyltransferase involved in the post-translational modification of proteins. It can catalyze the addition of adenosine monophosphate (AMP) or uridine monophosphate (UMP) to a protein, resulting in modifications known as AMPylation and UMPylation. In Shigella boydii serotype 4 (strain Sb227), this protein is Protein nucleotidyltransferase YdiU.